A 291-amino-acid chain; its full sequence is 3-hydroxy-5-phosphonooxypentane-2,4-dione thiolase (291 aa).

K203 serves as the catalytic Schiff-base intermediate with substrate.

Belongs to the DeoC/FbaB aldolase family. In terms of assembly, homodecamer.

The protein resides in the cytoplasm. The catalysed reaction is dihydroxyacetone phosphate + acetyl-CoA = 3-hydroxy-2,4-dioxopentyl phosphate + CoA. Involved in the degradation of phospho-AI-2, thereby terminating induction of the lsr operon and closing the AI-2 signaling cycle. Catalyzes the transfer of an acetyl moiety from 3-hydroxy-5-phosphonooxypentane-2,4-dione to CoA to form glycerone phosphate and acetyl-CoA. This chain is 3-hydroxy-5-phosphonooxypentane-2,4-dione thiolase, found in Photorhabdus laumondii subsp. laumondii (strain DSM 15139 / CIP 105565 / TT01) (Photorhabdus luminescens subsp. laumondii).